A 509-amino-acid polypeptide reads, in one-letter code: Histidine ammonia-lyase (509 aa).

Positions 142–144 (ASG) form a cross-link, 5-imidazolinone (Ala-Gly). Residue serine 143 is modified to 2,3-didehydroalanine (Ser).

Belongs to the PAL/histidase family. Contains an active site 4-methylidene-imidazol-5-one (MIO), which is formed autocatalytically by cyclization and dehydration of residues Ala-Ser-Gly.

It localises to the cytoplasm. The enzyme catalyses L-histidine = trans-urocanate + NH4(+). It participates in amino-acid degradation; L-histidine degradation into L-glutamate; N-formimidoyl-L-glutamate from L-histidine: step 1/3. The polypeptide is Histidine ammonia-lyase (Sphingopyxis alaskensis (strain DSM 13593 / LMG 18877 / RB2256) (Sphingomonas alaskensis)).